Here is a 2579-residue protein sequence, read N- to C-terminus: Ectopic P granules protein 5 homolog (2579 aa).

Disordered stretches follow at residues 1 to 46 (MAEA…SREQ) and 92 to 132 (NEES…GTKV). Residues 7 to 23 (PQRRAKAKASRTKTKEK) are compositionally biased toward basic residues. A compositionally biased stretch (basic and acidic residues) spans 24–34 (KKYETPQREES). Residue T134 is modified to Phosphothreonine. Residues 535 to 564 (PSERKPSSSGPGSGTWTLVDEGGEEDEDPE) are disordered. Residues 555-564 (EGGEEDEDPE) are compositionally biased toward acidic residues. The stretch at 1607–1633 (MHKNEAISQQLHVLRKEVKQLQAEAAK) forms a coiled coil.

It belongs to the EPG5 family. Interacts with RAN.

It localises to the cytoplasm. Its subcellular location is the perinuclear region. It is found in the lysosome. Its function is as follows. Involved in autophagy. May play a role in a late step of autophagy, such as clearance of autophagosomal cargo. Plays a key role in innate and adaptive immune response triggered by unmethylated cytidine-phosphate-guanosine (CpG) dinucleotides from pathogens, and mediated by the nucleotide-sensing receptor TLR9. It is necessary for the translocation of CpG dinucleotides from early endosomes to late endosomes and lysosomes, where TLR9 is located. The sequence is that of Ectopic P granules protein 5 homolog (EPG5) from Homo sapiens (Human).